Reading from the N-terminus, the 243-residue chain is Ubiquinone/menaquinone biosynthesis C-methyltransferase UbiE (243 aa).

S-adenosyl-L-methionine contacts are provided by residues threonine 69, aspartate 90, and 116-117 (DA).

Belongs to the class I-like SAM-binding methyltransferase superfamily. MenG/UbiE family.

The enzyme catalyses a 2-demethylmenaquinol + S-adenosyl-L-methionine = a menaquinol + S-adenosyl-L-homocysteine + H(+). It carries out the reaction a 2-methoxy-6-(all-trans-polyprenyl)benzene-1,4-diol + S-adenosyl-L-methionine = a 5-methoxy-2-methyl-3-(all-trans-polyprenyl)benzene-1,4-diol + S-adenosyl-L-homocysteine + H(+). It participates in quinol/quinone metabolism; menaquinone biosynthesis; menaquinol from 1,4-dihydroxy-2-naphthoate: step 2/2. It functions in the pathway cofactor biosynthesis; ubiquinone biosynthesis. In terms of biological role, methyltransferase required for the conversion of demethylmenaquinol (DMKH2) to menaquinol (MKH2) and the conversion of 2-polyprenyl-6-methoxy-1,4-benzoquinol (DDMQH2) to 2-polyprenyl-3-methyl-6-methoxy-1,4-benzoquinol (DMQH2). This is Ubiquinone/menaquinone biosynthesis C-methyltransferase UbiE from Burkholderia mallei (strain NCTC 10247).